Consider the following 611-residue polypeptide: Major facilitator superfamily domain-containing protein YCR023C (611 aa).

The Extracellular segment spans residues 1 to 89; it reads MARQKLTFKE…GRFSEKHGRK (89 aa). Residues 90 to 110 traverse the membrane as a helical segment; that stretch reads ITLTCGLIGTSVSLLILGFSR. Residues 111 to 152 lie on the Cytoplasmic side of the membrane; that stretch reads NFYQALVARSLMGLLNGNVGVIRTIIGEIATERKHQALAFST. Residues 153–173 form a helical membrane-spanning segment; the sequence is MPLLFQFGAVVGPMIGGFLVF. The Extracellular segment spans residues 174-199; sequence RDGTMNEVPLWFPHFAKRIIRSYPYA. Residues 200–220 form a helical membrane-spanning segment; it reads LPNVVVCMFLMFGLTNATLFL. Residues 221–353 are Cytoplasmic-facing; that stretch reads EETHPAFKDR…SIFHHVFHTK (133 aa). A compositionally biased stretch (basic and acidic residues) spans 261–271; the sequence is DDSENIHHRNE. Residues 261–301 form a disordered region; sequence DDSENIHHRNENVNSIRGQDSEEDENSPLVNTTNDDDTESI. The residue at position 313 (serine 313) is a Phosphoserine. The chain crosses the membrane as a helical span at residues 354–372; it reads VFYPISVNFIMALHLIVYN. Residues 373 to 413 are Extracellular-facing; it reads EFLPVFLAYDLAVDPENPKKLASKFPWKISGGIGYEPEQTG. Residues 414–434 traverse the membrane as a helical segment; the sequence is TLLSTTGIFGCFVVIFIFPIV. The Cytoplasmic segment spans residues 435 to 442; sequence DRNFDCLT. The chain crosses the membrane as a helical span at residues 443–463; the sequence is IFRTLVKLYPIMYVMVPYVVF. The Extracellular segment spans residues 464 to 542; that stretch reads LQNERIPSWY…YIMSWSQQND (79 aa). Residues 543 to 563 traverse the membrane as a helical segment; that stretch reads VAWVSWWSLSLFCMVALYQSY. The Cytoplasmic segment spans residues 564-611; that stretch reads KIAPIDDNENELHGQGSEDAYNSQSQSSDLRMAHRSSLSSLSNQRCTT. Serine 603 is modified (phosphoserine).

It belongs to the major facilitator superfamily.

It is found in the membrane. It catalyses the reaction chloride(in) = chloride(out). In terms of biological role, outward-rectifying chloride channel involved in chloride homeostasis. This chain is Major facilitator superfamily domain-containing protein YCR023C, found in Saccharomyces cerevisiae (strain ATCC 204508 / S288c) (Baker's yeast).